The primary structure comprises 479 residues: F-box protein SKIP17 (479 aa).

The region spanning 92-138 is the F-box domain; sequence NSNSWSLPPELTIKVFSMLDTKSMMQAAVCCTMFNKCAMDRLCYSHI. The interval 435–479 is disordered; that stretch reads EMMEAEDDEVDEEDDSDDDTDDVSDEDESENDDDMGMGFDVDYLL. Residues 437 to 469 show a composition bias toward acidic residues; that stretch reads MEAEDDEVDEEDDSDDDTDDVSDEDESENDDDM.

As to quaternary structure, part of a SCF (ASK-cullin-F-box) protein ligase complex. Interacts with SPK1B/ASK2.

Its subcellular location is the nucleus. It participates in protein modification; protein ubiquitination. In terms of biological role, component of SCF(ASK-cullin-F-box) E3 ubiquitin ligase complexes, which may mediate the ubiquitination and subsequent proteasomal degradation of target proteins. The sequence is that of F-box protein SKIP17 (SKIP17) from Arabidopsis thaliana (Mouse-ear cress).